The following is a 222-amino-acid chain: Pro-opiomelanocortin (222 aa).

The N-terminal stretch at 1-18 (MCPVWLLVAVVVVGGSRG) is a signal peptide. Positions 19 to 90 (AVSQCWEHPS…SSSSSSSPQS (72 aa)) are excised as a propeptide. 2 disordered regions span residues 56 to 98 (IPGN…SMEH) and 148 to 170 (EEEKAQEVMAEEEEEQKQLLQEK). The span at 70-93 (PSSSSSFILPSSSSSSSSPQSKRS) shows a compositional bias: low complexity. Residues 148 to 162 (EEEKAQEVMAEEEEE) are compositionally biased toward acidic residues.

The protein belongs to the POMC family. In terms of processing, specific enzymatic cleavages at paired basic residues yield the different active peptides.

The protein resides in the secreted. Its function is as follows. Stimulates the adrenal glands to release cortisol. Anorexigenic peptide. Increases the pigmentation of skin by increasing melanin production in melanocytes. Functionally, increases the pigmentation of skin by increasing melanin production in melanocytes. In terms of biological role, endogenous orexigenic opiate. Its function is as follows. Endogenous opiate. The polypeptide is Pro-opiomelanocortin (pomc) (Thunnus obesus (Bigeye tuna)).